The following is a 426-amino-acid chain: Enolase (426 aa).

Gln163 is a (2R)-2-phosphoglycerate binding site. Residue Glu205 is the Proton donor of the active site. Residues Asp242, Glu283, and Asp310 each contribute to the Mg(2+) site. Residues Lys335, Arg364, Ser365, and Lys386 each contribute to the (2R)-2-phosphoglycerate site. Lys335 functions as the Proton acceptor in the catalytic mechanism.

The protein belongs to the enolase family. Mg(2+) is required as a cofactor.

Its subcellular location is the cytoplasm. The protein resides in the secreted. It is found in the cell surface. It carries out the reaction (2R)-2-phosphoglycerate = phosphoenolpyruvate + H2O. Its pathway is carbohydrate degradation; glycolysis; pyruvate from D-glyceraldehyde 3-phosphate: step 4/5. Catalyzes the reversible conversion of 2-phosphoglycerate (2-PG) into phosphoenolpyruvate (PEP). It is essential for the degradation of carbohydrates via glycolysis. This chain is Enolase, found in Aquifex aeolicus (strain VF5).